A 207-amino-acid chain; its full sequence is FMN-dependent NADH:quinone oxidoreductase 1 (207 aa).

FMN is bound by residues serine 9, 15–17 (SIS), and 139–142 (TRGG).

Belongs to the azoreductase type 1 family. As to quaternary structure, homodimer. Requires FMN as cofactor.

The catalysed reaction is 2 a quinone + NADH + H(+) = 2 a 1,4-benzosemiquinone + NAD(+). It carries out the reaction N,N-dimethyl-1,4-phenylenediamine + anthranilate + 2 NAD(+) = 2-(4-dimethylaminophenyl)diazenylbenzoate + 2 NADH + 2 H(+). In terms of biological role, quinone reductase that provides resistance to thiol-specific stress caused by electrophilic quinones. Its function is as follows. Also exhibits azoreductase activity. Catalyzes the reductive cleavage of the azo bond in aromatic azo compounds to the corresponding amines. The protein is FMN-dependent NADH:quinone oxidoreductase 1 of Trichormus variabilis (strain ATCC 29413 / PCC 7937) (Anabaena variabilis).